Consider the following 149-residue polypeptide: Transcription factor MafF (149 aa).

Positions 51-76 (RLKQRRRTLKNRGYAASCRVKRVCQK) are basic motif. The bZIP domain occupies 51–114 (RLKQRRRTLK…DTLRGKYEAL (64 aa)). The segment at 79–93 (LQKQKMELEWEVDKL) is leucine-zipper.

This sequence belongs to the bZIP family. Maf subfamily. In terms of assembly, monomer and homo- or heterodimer. In terms of tissue distribution, highly expressed in the ovary, lower expression in the brain, heart and mesenterium.

The protein localises to the nucleus. Its function is as follows. Since it lacks a putative transactivation domain, it may behave as a transcriptional repressor when it dimerizes among itself. May also serve as a transcriptional activator by dimerizing with other (usually larger) basic-zipper proteins and recruiting them to specific DNA-binding sites. May be involved in the cellular stress response. The sequence is that of Transcription factor MafF (MAFF) from Gallus gallus (Chicken).